A 358-amino-acid polypeptide reads, in one-letter code: tRNA (guanine-N(7)-)-methyltransferase (358 aa).

The interval 1–29 is disordered; that stretch reads MTPPPPKRQKRDEYRKATAEATSQSGASD. S-adenosyl-L-methionine-binding positions include G99 and 122 to 123; that span reads EI. The span at 151–186 shows a compositional bias: low complexity; it reads TATAASETPSQQQAQIDGKQANANAAADAASPAPST. The interval 151 to 194 is disordered; that stretch reads TATAASETPSQQQAQIDGKQANANAAADAASPAPSTDTEHMPTT. Residues 209-210 and C229 each bind S-adenosyl-L-methionine; that span reads NT. D232 is a catalytic residue. 330 to 332 is a binding site for S-adenosyl-L-methionine; that stretch reads TEE.

The protein belongs to the class I-like SAM-binding methyltransferase superfamily. TrmB family. As to quaternary structure, forms a complex with trm82.

Its subcellular location is the nucleus. It catalyses the reaction guanosine(46) in tRNA + S-adenosyl-L-methionine = N(7)-methylguanosine(46) in tRNA + S-adenosyl-L-homocysteine. The protein operates within tRNA modification; N(7)-methylguanine-tRNA biosynthesis. Catalyzes the formation of N(7)-methylguanine at position 46 (m7G46) in tRNA. This chain is tRNA (guanine-N(7)-)-methyltransferase (trm8), found in Aspergillus fumigatus (strain ATCC MYA-4609 / CBS 101355 / FGSC A1100 / Af293) (Neosartorya fumigata).